A 119-amino-acid polypeptide reads, in one-letter code: Putative arsenical resistance operon repressor ArsR2 (119 aa).

One can recognise an HTH arsR-type domain in the interval 24–119 (VDSDAMATDL…TLDDLRGNHE (96 aa)). The H-T-H motif DNA-binding region spans 60-83 (VCDLEATVGVSQSAVSQALSRLYT).

In terms of biological role, transcriptional repressor for the arsR2M operon. This is Putative arsenical resistance operon repressor ArsR2 (arsR2) from Halobacterium salinarum (strain ATCC 700922 / JCM 11081 / NRC-1) (Halobacterium halobium).